Reading from the N-terminus, the 549-residue chain is MSKRGADHQLTKDQDDSDDDRHGPVEVPKEASADVMATRKIAKPKSRKRPTSGVSSPGIFANLAAKPVSLPASTTQFTFGKPAVTANNDSDIHLKKRGLNKSFIDAVIKSVDNNPFGNLSPLFDEYRQHFSSIEKKPAEEQPTSNAVVSEVNPQQQKSQDSSSFVTEKPASSEKEDKEKPLVPPGAPRFGFSAPALGSSFQFNSSAFTPKGSFGEKSATEAEAKEKETSSNQTATGTAATTTNQFSFNTAANPFAFAKKENEESKPLTPVFSFSTTMASADASKETKQTHETKDSKSEESKPSNNEKSENAVEPAKGNTMSFSWTPDKPIKFDTPEKKFTFTNPLSSKKLPASSDVKPPSAAAVGFSFGTTTNPFSFAAPKSSFPTSSTPASVGAEKSEETSNGNKSEQEEKENGNDETRSNDSLVSGKGKGEENEDSVFETRAKIYRFDATSKSYSDIGIGPLKINVDRDTGSARILARVEGSGKLLLNVRLCQDFEYSLAGKKDVKVPAASTDGKSIEMYLIRVKEPSTAEKLLAELNEKKVSKSEN.

Residues 1–32 (MSKRGADHQLTKDQDDSDDDRHGPVEVPKEAS) are compositionally biased toward basic and acidic residues. 3 disordered regions span residues 1 to 57 (MSKR…VSSP), 133 to 193 (IEKK…GFSA), and 207 to 438 (FTPK…NEDS). The residue at position 17 (S17) is a Phosphoserine. The span at 40 to 50 (KIAKPKSRKRP) shows a compositional bias: basic residues. Polar residues predominate over residues 141-165 (QPTSNAVVSEVNPQQQKSQDSSSFV). Composition is skewed to basic and acidic residues over residues 170-180 (ASSEKEDKEKP) and 217-228 (SATEAEAKEKET). A compositionally biased stretch (low complexity) spans 229 to 244 (SSNQTATGTAATTTNQ). 2 stretches are compositionally biased toward basic and acidic residues: residues 282 to 310 (ASKETKQTHETKDSKSEESKPSNNEKSEN) and 328 to 339 (KPIKFDTPEKKF). At S347 the chain carries Phosphoserine. Residues 407–421 (SEQEEKENGNDETRS) show a composition bias toward basic and acidic residues. The 134-residue stretch at 416–549 (NDETRSNDSL…NEKKVSKSEN (134 aa)) folds into the RanBD1 domain.

Its subcellular location is the nucleus. It localises to the nuclear pore complex. In terms of biological role, functions as a component of the nuclear pore complex (NPC). NPC components, collectively referred to as nucleoporins (NUPs), can play the role of both NPC structural components and of docking or interaction partners for transiently associated nuclear transport factors. Active directional transport is assured by both, a Phe-Gly (FG) repeat affinity gradient for these transport factors across the NPC and a transport cofactor concentration gradient across the nuclear envelope. May play a role in mitotic spindle formation and/or function. The protein is Nucleoporin nup61 (nup61) of Schizosaccharomyces pombe (strain 972 / ATCC 24843) (Fission yeast).